We begin with the raw amino-acid sequence, 637 residues long: 3D-(3,5/4)-trihydroxycyclohexane-1,2-dione hydrolase (637 aa).

E66 is a thiamine diphosphate binding site. A thiamine pyrophosphate binding region spans residues 442–522 (SLPGDLQRLW…INILLFDNAG (81 aa)). Mg(2+) is bound by residues D493 and N520.

Belongs to the TPP enzyme family. It depends on Mg(2+) as a cofactor. Thiamine diphosphate serves as cofactor.

It catalyses the reaction 3D-3,5/4-trihydroxycyclohexane-1,2-dione + H2O = 5-deoxy-D-glucuronate + H(+). Its pathway is polyol metabolism; myo-inositol degradation into acetyl-CoA; acetyl-CoA from myo-inositol: step 3/7. Involved in the cleavage of the C1-C2 bond of 3D-(3,5/4)-trihydroxycyclohexane-1,2-dione (THcHDO) to yield 5-deoxy-glucuronate (5DG). The polypeptide is 3D-(3,5/4)-trihydroxycyclohexane-1,2-dione hydrolase (Shouchella clausii (strain KSM-K16) (Alkalihalobacillus clausii)).